Here is a 50-residue protein sequence, read N- to C-terminus: uncharacterized protein (50 aa).

This is an uncharacterized protein from Bacillus subtilis (strain 168).